Reading from the N-terminus, the 245-residue chain is Superoxide dismutase [Mn], mitochondrial (245 aa).

The transit peptide at 1 to 32 (MVNLGSIWQNLLASQAPLQSMTGNATTMAGLA) directs the protein to the mitochondrion. The Mn(2+) site is built by histidine 58, histidine 106, aspartate 196, and histidine 200.

This sequence belongs to the iron/manganese superoxide dismutase family. In terms of assembly, homotetramer. Mn(2+) is required as a cofactor.

It localises to the mitochondrion matrix. The catalysed reaction is 2 superoxide + 2 H(+) = H2O2 + O2. In terms of biological role, destroys superoxide anion radicals which are normally produced within the cells and which are toxic to biological systems. The polypeptide is Superoxide dismutase [Mn], mitochondrial (sod-2) (Neurospora crassa (strain ATCC 24698 / 74-OR23-1A / CBS 708.71 / DSM 1257 / FGSC 987)).